Reading from the N-terminus, the 84-residue chain is Protein Tlp homolog (84 aa).

The disordered stretch occupies residues 1–20 (MGKEERYTKKPKPDDRSDNV).

The protein belongs to the Tlp family.

This Caldanaerobacter subterraneus subsp. tengcongensis (strain DSM 15242 / JCM 11007 / NBRC 100824 / MB4) (Thermoanaerobacter tengcongensis) protein is Protein Tlp homolog.